Consider the following 300-residue polypeptide: Neutral protease NprE (300 aa).

D139 is a Ca(2+) binding site. H143 contacts Zn(2+). Residue E144 is part of the active site. H147 and E167 together coordinate Zn(2+). Positions 178, 181, 183, and 186 each coordinate Ca(2+). The Proton donor role is filled by H228.

Belongs to the peptidase M4 family. Ca(2+) serves as cofactor. It depends on Zn(2+) as a cofactor.

It localises to the secreted. It catalyses the reaction Similar, but not identical, to that of thermolysin.. In terms of biological role, extracellular zinc metalloprotease. The chain is Neutral protease NprE (nprE) from Bacillus pumilus (Bacillus mesentericus).